The sequence spans 168 residues: Monothiol glutaredoxin-S7, chloroplastic (168 aa).

A chloroplast-targeting transit peptide spans 1–54; sequence MAATAAASVAAISPLPGASLPRPVSARVPLLPRASPPTWRLSVGSARARSTRCL. The region spanning 67–168 is the Glutaredoxin domain; sequence RATLDKVVGS…QETLEKAMLS (102 aa). Lys-84 contacts glutathione. Cys-92 serves as a coordination point for [2Fe-2S] cluster. Residues Arg-121, Phe-133, and 146–147 contribute to the glutathione site; that span reads CD.

This sequence belongs to the glutaredoxin family. CGFS subfamily.

It is found in the plastid. It localises to the chloroplast. Its function is as follows. May only reduce GSH-thiol disulfides, but not protein disulfides. This is Monothiol glutaredoxin-S7, chloroplastic (GRXS7) from Oryza sativa subsp. japonica (Rice).